The sequence spans 449 residues: Dynein regulatory complex protein 10 (449 aa).

The stretch at 90-125 forms a coiled coil; sequence AVREHEDLCQVLLENVRCLKEKERQLQEQKEAEEEG. The IQ domain maps to 400 to 429; the sequence is MVRAATLIQALWKGYLVRSLLRSKKKRGKG. Residues 422 to 449 form a disordered region; the sequence is SKKKRGKGKAKDKEKGKQKGKEKGKGKK. Residues 430–449 are compositionally biased toward basic and acidic residues; sequence KAKDKEKGKQKGKEKGKGKK.

This sequence belongs to the DRC10 family. Component of the nexin-dynein regulatory complex (N-DRC). Interacts with CFAP52.

It is found in the cytoplasm. The protein resides in the cytoskeleton. It localises to the flagellum axoneme. Functionally, component of the nexin-dynein regulatory complex (N-DRC), a key regulator of ciliary/flagellar motility which maintains the alignment and integrity of the distal axoneme and regulates microtubule sliding in motile axonemes. This chain is Dynein regulatory complex protein 10 (IQCD), found in Homo sapiens (Human).